The following is a 490-amino-acid chain: Cis-aconitate decarboxylase (490 aa).

This sequence belongs to the PrpD family. Homodimer.

It is found in the mitochondrion. It catalyses the reaction cis-aconitate + H(+) = itaconate + CO2. Its function is as follows. Involved in the production of itaconic acid, a soluble unsaturated dicarboxylic acid mainly produced from sugars. The polypeptide is Cis-aconitate decarboxylase (cad1) (Aspergillus terreus (strain NIH 2624 / FGSC A1156)).